Consider the following 633-residue polypeptide: GTPase-GDP dissociation stimulator BEM4 (633 aa).

In terms of assembly, interacts with CDC42; the interaction is direct. Interacts with RHO1; the interaction is direct. Interacts with RHO2. Interacts with RHO4. Interacts with CDC11.

The protein resides in the nucleus. Its subcellular location is the cytoplasm. Its function is as follows. Probably acts as a GEF (guanine nucleotide exchange factor) for the Rho family of small GTP-binding proteins (G proteins) that stimulates the dissociation of GDP to enable subsequent binding of GTP. May also chaperone the processing and/or trafficking of small GTPases independently of GEF activity. Involved in the control of polarized cell growth via CDC42-mediated signaling. Involved in the control of cell-wall organization via RHO1-mediated signaling. May also function via RHO2 and RHO4. This Saccharomyces cerevisiae (strain ATCC 204508 / S288c) (Baker's yeast) protein is GTPase-GDP dissociation stimulator BEM4.